Reading from the N-terminus, the 437-residue chain is Protein farnesyltransferase subunit beta (437 aa).

PFTB repeat units lie at residues 123–164 (ATDV…CIIG), 174–215 (REKL…SLTN), 222–263 (FEGT…VILK), 270–312 (LKSL…PLLH), and 332–374 (QQAL…SIAQ). (2E,6E)-farnesyl diphosphate contacts are provided by residues 248 to 251 (HGGY) and 291 to 294 (RCNK). 2 residues coordinate Zn(2+): aspartate 297 and cysteine 299. Position 300-303 (300-303 (YSFW)) interacts with (2E,6E)-farnesyl diphosphate. Histidine 362 is a binding site for Zn(2+). A Phosphothreonine modification is found at threonine 436.

Belongs to the protein prenyltransferase subunit beta family. In terms of assembly, heterodimer of FNTA and FNTB. Zn(2+) is required as a cofactor.

The enzyme catalyses L-cysteinyl-[protein] + (2E,6E)-farnesyl diphosphate = S-(2E,6E)-farnesyl-L-cysteinyl-[protein] + diphosphate. Essential subunit of the farnesyltransferase complex. Catalyzes the transfer of a farnesyl moiety from farnesyl diphosphate to a cysteine at the fourth position from the C-terminus of several proteins having the C-terminal sequence Cys-aliphatic-aliphatic-X. This Bos taurus (Bovine) protein is Protein farnesyltransferase subunit beta (FNTB).